We begin with the raw amino-acid sequence, 261 residues long: Protein-ADP-ribose hydrolase (261 aa).

In terms of domain architecture, Macro spans 74–261 (ADLKPVTGRG…DEALYNKLMS (188 aa)). ADP-D-ribose-binding residues include Asp93, Ile94, and Asn107. Zn(2+)-binding residues include Cys113, His118, and Cys120. The ADP-D-ribose site is built by Cys120, Ile121, Asp122, Ser211, Thr212, Gly213, and Phe215.

The protein belongs to the MacroD-type family. Zn-Macro subfamily. Requires Zn(2+) as cofactor.

The enzyme catalyses 4-O-(ADP-D-ribosyl)-L-aspartyl-[protein] + H2O = L-aspartyl-[protein] + ADP-D-ribose + H(+). ADP-ribosylhydrolase that specifically reverses the SirTM-mediated mono-ADP-ribosylation at an asparatate residue of GcvH-L, by releasing ADP-ribose from the target protein. May play a role in the regulation of the response to host-induced oxidative stress. The protein is Protein-ADP-ribose hydrolase of Treponema medium.